A 120-amino-acid polypeptide reads, in one-letter code: Meiosis expressed gene 1 protein homolog (120 aa).

Residues 1–45 (MDGLAIGGVSAPMTAERPQQVKKQLSRRTPDAADGRKPTRMERAK) form a disordered region. Residues 28 to 45 (RTPDAADGRKPTRMERAK) show a composition bias toward basic and acidic residues.

The protein belongs to the MEIG1 family.

The sequence is that of Meiosis expressed gene 1 protein homolog from Oxyrrhis marina (Dinoflagellate).